The following is a 506-amino-acid chain: Maturase K (506 aa).

The protein belongs to the intron maturase 2 family. MatK subfamily.

It is found in the plastid. It localises to the chloroplast. Functionally, usually encoded in the trnK tRNA gene intron. Probably assists in splicing its own and other chloroplast group II introns. In Lathyrus aphaca (Yellow vetchling), this protein is Maturase K.